Consider the following 227-residue polypeptide: Phosphoribosylformylglycinamidine synthase subunit PurQ (227 aa).

Positions 2-226 (KFAVIQFPGS…VKAWKEEQVN (225 aa)) constitute a Glutamine amidotransferase type-1 domain. Cys-86 serves as the catalytic Nucleophile. Active-site residues include His-195 and Glu-197.

Part of the FGAM synthase complex composed of 1 PurL, 1 PurQ and 2 PurS subunits.

Its subcellular location is the cytoplasm. The enzyme catalyses N(2)-formyl-N(1)-(5-phospho-beta-D-ribosyl)glycinamide + L-glutamine + ATP + H2O = 2-formamido-N(1)-(5-O-phospho-beta-D-ribosyl)acetamidine + L-glutamate + ADP + phosphate + H(+). The catalysed reaction is L-glutamine + H2O = L-glutamate + NH4(+). Its pathway is purine metabolism; IMP biosynthesis via de novo pathway; 5-amino-1-(5-phospho-D-ribosyl)imidazole from N(2)-formyl-N(1)-(5-phospho-D-ribosyl)glycinamide: step 1/2. Part of the phosphoribosylformylglycinamidine synthase complex involved in the purines biosynthetic pathway. Catalyzes the ATP-dependent conversion of formylglycinamide ribonucleotide (FGAR) and glutamine to yield formylglycinamidine ribonucleotide (FGAM) and glutamate. The FGAM synthase complex is composed of three subunits. PurQ produces an ammonia molecule by converting glutamine to glutamate. PurL transfers the ammonia molecule to FGAR to form FGAM in an ATP-dependent manner. PurS interacts with PurQ and PurL and is thought to assist in the transfer of the ammonia molecule from PurQ to PurL. This chain is Phosphoribosylformylglycinamidine synthase subunit PurQ, found in Listeria monocytogenes serovar 1/2a (strain ATCC BAA-679 / EGD-e).